A 753-amino-acid polypeptide reads, in one-letter code: LON peptidase N-terminal domain and RING finger protein 3 (753 aa).

The interval 17-57 is disordered; sequence GSNNLELAEPEEPGTSAAAGQSAAHPEEVTPEGSQALGAQE. Residues 72–105 form a TPR 1 repeat; that stretch reads CKVLLTQADALASEGHLREALEVYRQLSERQQLV. An RING-type 1 zinc finger spans residues 159 to 197; sequence CKKCHGFLSDPVSLWCGHTFCKLCLERGRAADRRCALCG. TPR repeat units follow at residues 244-277, 279-311, and 313-345; these read ASQLRHEGNRLFREHQVEAALLKYNEAVRLAPND, LLYSNRSQIYFTLESHEDALHDAEIACKLRPMG, and KAHFRKAQALATLGKVKEALKEFLYCVSLDGKN. Residues 351–450 are disordered; the sequence is EAQRENLELP…QGAKPDLSNP (100 aa). A compositionally biased stretch (low complexity) spans 363 to 382; that stretch reads SNQEGAAAAEESSSLANSAQ. A compositionally biased stretch (basic and acidic residues) spans 386–413; sequence SSKEDRKKDQEGEDRDAASVRTGKCQEK. The RING-type 2 zinc-finger motif lies at 461-499; it reads CSLCMRLFYEPVTTPCGHTFCLKCLERCLDHNAKCPLCK. Residues 540 to 749 form the Lon N-terminal domain; the sequence is MEELSNLNKN…GIRRILAFIS (210 aa).

The chain is LON peptidase N-terminal domain and RING finger protein 3 (Lonrf3) from Mus musculus (Mouse).